Consider the following 193-residue polypeptide: MKRSCENDVSVLRYGHRPGRDDRMTTHVGLTARALGADQVIFPDNATQSAETVSDIVSRFGGPFDVERTDGLNATIREWSGTVIHLTMYGERVQDVTEVIRETCLHHQPLLIIIGGEKVPSDVYEWADWNIAVTNQPHSEVAGLAVFLDRLFMGQELEQEWAGAEHVVVPQACGKRVVDAELTTEADEMNAEK.

S-adenosyl-L-methionine contacts are provided by residues Leu-86 and 115 to 119 (GGEKV).

It belongs to the aTrm56 family. As to quaternary structure, homodimer.

The protein resides in the cytoplasm. The enzyme catalyses cytidine(56) in tRNA + S-adenosyl-L-methionine = 2'-O-methylcytidine(56) in tRNA + S-adenosyl-L-homocysteine + H(+). Functionally, specifically catalyzes the AdoMet-dependent 2'-O-ribose methylation of cytidine at position 56 in tRNAs. The sequence is that of tRNA (cytidine(56)-2'-O)-methyltransferase from Haloquadratum walsbyi (strain DSM 16790 / HBSQ001).